A 38-amino-acid chain; its full sequence is Large ribosomal subunit protein bL36 (38 aa).

It belongs to the bacterial ribosomal protein bL36 family.

This Streptococcus agalactiae serotype III (strain NEM316) protein is Large ribosomal subunit protein bL36.